The chain runs to 207 residues: Pyridoxine/pyridoxamine 5'-phosphate oxidase (207 aa).

FMN is bound by residues 53–58, 68–69, K75, and Q97; these read RMVLLK and YT. K58 lines the substrate pocket. Y115, R119, and S123 together coordinate substrate. Residues 132-133 and W177 contribute to the FMN site; that span reads QS. Position 183–185 (183–185) interacts with substrate; that stretch reads RLH. Position 187 (R187) interacts with FMN.

The protein belongs to the pyridoxamine 5'-phosphate oxidase family. In terms of assembly, homodimer. FMN is required as a cofactor.

It carries out the reaction pyridoxamine 5'-phosphate + O2 + H2O = pyridoxal 5'-phosphate + H2O2 + NH4(+). The enzyme catalyses pyridoxine 5'-phosphate + O2 = pyridoxal 5'-phosphate + H2O2. It participates in cofactor metabolism; pyridoxal 5'-phosphate salvage; pyridoxal 5'-phosphate from pyridoxamine 5'-phosphate: step 1/1. It functions in the pathway cofactor metabolism; pyridoxal 5'-phosphate salvage; pyridoxal 5'-phosphate from pyridoxine 5'-phosphate: step 1/1. Catalyzes the oxidation of either pyridoxine 5'-phosphate (PNP) or pyridoxamine 5'-phosphate (PMP) into pyridoxal 5'-phosphate (PLP). The chain is Pyridoxine/pyridoxamine 5'-phosphate oxidase from Bartonella henselae (strain ATCC 49882 / DSM 28221 / CCUG 30454 / Houston 1) (Rochalimaea henselae).